The following is a 35-amino-acid chain: MSDIN-like toxin proprotein 8 (35 aa).

Residues 1–10 constitute a propeptide that is removed on maturation; that stretch reads MSDINATRLP. Residues 11–18 constitute a cross-link (cyclopeptide (Phe-Pro)); the sequence is FVFVASPP. A propeptide spanning residues 19–35 is cleaved from the precursor; that stretch reads CVGDDIAMVLTRGENLC.

It belongs to the MSDIN fungal toxin family. Post-translationally, processed by the macrocyclase-peptidase enzyme POPB to yield a toxic cyclic octapeptide. POPB first removes 10 residues from the N-terminus. Conformational trapping of the remaining peptide forces the enzyme to release this intermediate rather than proceed to macrocyclization. The enzyme rebinds the remaining peptide in a different conformation and catalyzes macrocyclization of the N-terminal 8 residues. In terms of tissue distribution, expressed in basidiocarps.

Functionally, probable toxin that belongs to the MSDIN-like toxin family responsible for a large number of food poisoning cases and deaths. The polypeptide is MSDIN-like toxin proprotein 8 (Amanita exitialis (Guangzhou destroying angel)).